The following is a 55-amino-acid chain: MSDKICVVCKTPIDSALVVETDKGPVHPGPCYNYIKELPVSESSEEQLNETQLLL.

This is an uncharacterized protein from Escherichia coli (Bacteriophage T4).